A 583-amino-acid chain; its full sequence is Ankyrin repeat and SOCS box protein 15 (583 aa).

ANK repeat units follow at residues 75 to 104, 110 to 139, 143 to 172, 176 to 205, 209 to 238, 242 to 271, 275 to 304, 307 to 336, 349 to 378, 379 to 408, and 416 to 444; these read KGWFPLHEAVVQPIQQILETVLDASYKTLW, DGETPLTLAVKAGLVENVKTLLDKGVWPNT, KGETPLLIAIKRGSYDMVSALIKYNTSLDQ, KRWSAMHEAAKQGRKDIITLLLNHRGNVHL, FGVTPLGVAAEYGHCDVLEHLIHKGGDVFA, DGASVLFEAAGGGNPDCISLLLKYGGSGNV, AGHLPIHRAAYEGHYLALKYLIPVTSKHAI, SGLTPIHSAAEGQNAQCLELLIENGFDVNA, ERKTALYFAVSNNDIHCTEVLLAAGADPNL, DPLNCLLVAVRANRHEIVRLLLSYGANVNC, and TRFPSAIQYALNDEIMLRLLLNNGYQVEL. The region spanning 524-579 is the SOCS box domain; it reads WPEIRQIIENPCSLKHLCRLKIRRVMGLQRLCQPASIQMLPLPAAMRRYLLFKEFD.

This sequence belongs to the ankyrin SOCS box (ASB) family.

The protein operates within protein modification; protein ubiquitination. Functionally, may be a substrate-recognition component of a SCF-like ECS (Elongin-Cullin-SOCS-box protein) E3 ubiquitin-protein ligase complex which mediates the ubiquitination and subsequent proteasomal degradation of target proteins. The sequence is that of Ankyrin repeat and SOCS box protein 15 (Asb15) from Mus musculus (Mouse).